The sequence spans 196 residues: Pyridoxal 5'-phosphate synthase subunit PdxT (196 aa).

L-glutamine is bound at residue 47–49; that stretch reads GES. Catalysis depends on Cys-79, which acts as the Nucleophile. L-glutamine is bound by residues Arg-106 and 134-135; that span reads IR. Catalysis depends on charge relay system residues His-170 and Glu-172.

The protein belongs to the glutaminase PdxT/SNO family. In terms of assembly, in the presence of PdxS, forms a dodecamer of heterodimers. Only shows activity in the heterodimer.

The enzyme catalyses aldehydo-D-ribose 5-phosphate + D-glyceraldehyde 3-phosphate + L-glutamine = pyridoxal 5'-phosphate + L-glutamate + phosphate + 3 H2O + H(+). It catalyses the reaction L-glutamine + H2O = L-glutamate + NH4(+). It participates in cofactor biosynthesis; pyridoxal 5'-phosphate biosynthesis. Catalyzes the hydrolysis of glutamine to glutamate and ammonia as part of the biosynthesis of pyridoxal 5'-phosphate. The resulting ammonia molecule is channeled to the active site of PdxS. The protein is Pyridoxal 5'-phosphate synthase subunit PdxT of Bacillus cereus (strain Q1).